The chain runs to 819 residues: Pentatricopeptide repeat-containing protein At5g02860 (819 aa).

The interval 57-93 (QNPNSRQPISSQTSRNRNRTRIGKSRDPNLGKPWSYH) is disordered. 18 PPR repeats span residues 172-206 (DNSVVAIIISMLGKEGRVSSAANMFNGLQEDGFSL), 207-241 (DVYSYTSLISAFANSGRYREAVNVFKKMEEDGCKP), 242-277 (TLITYNVILNVFGKMGTPWNKITSLVEKMKSDGIAP), 278-312 (DAYTYNTLITCCKRGSLHQEAAQVFEEMKAAGFSY), 313-347 (DKVTYNALLDVYGKSHRPKEAMKVLNEMVLNGFSP), 348-382 (SIVTYNSLISAYARDGMLDEAMELKNQMAEKGTKP), 383-417 (DVFTYTTLLSGFERAGKVESAMSIFEEMRNAGCKP), 418-452 (NICTFNAFIKMYGNRGKFTEMMKIFDEINVCGLSP), 453-487 (DIVTWNTLLAVFGQNGMDSEVSGVFKEMKRAGFVP), 488-522 (ERETFNTLISAYSRCGSFEQAMTVYRRMLDAGVTP), 523-557 (DLSTYNTVLAALARGGMWEQSEKVLAEMEDGRCKP), 558-592 (NELTYCSLLHAYANGKEIGLMHSLAEEVYSGVIEP), 593-627 (RAVLLKTLVLVCSKCDLLPEAERAFSELKERGFSP), 628-662 (DITTLNSMVSIYGRRQMVAKANGVLDYMKERGFTP), 663-697 (SMATYNSLMYMHSRSADFGKSEEILREILAKGIKP), 698-732 (DIISYNTVIYAYCRNTRMRDASRIFSEMRNSGIVP), 733-767 (DVITYNTFIGSYAADSMFEEAIGVVRYMIKHGCRP), and 768-802 (NQNTYNSIVDGYCKLNRKDEAKLFVEDLRNLDPHA).

Belongs to the PPR family. P subfamily.

The sequence is that of Pentatricopeptide repeat-containing protein At5g02860 from Arabidopsis thaliana (Mouse-ear cress).